Reading from the N-terminus, the 87-residue chain is Small ribosomal subunit protein bS18 (87 aa).

Residues methionine 1–lysine 20 are compositionally biased toward basic and acidic residues. The segment at methionine 1 to proline 24 is disordered.

This sequence belongs to the bacterial ribosomal protein bS18 family. In terms of assembly, part of the 30S ribosomal subunit. Forms a tight heterodimer with protein bS6.

Its function is as follows. Binds as a heterodimer with protein bS6 to the central domain of the 16S rRNA, where it helps stabilize the platform of the 30S subunit. In Leifsonia xyli subsp. xyli (strain CTCB07), this protein is Small ribosomal subunit protein bS18.